Here is a 284-residue protein sequence, read N- to C-terminus: L-ribulose-5-phosphate 3-epimerase UlaE (284 aa).

This sequence belongs to the L-ribulose-5-phosphate 3-epimerase family.

It catalyses the reaction L-ribulose 5-phosphate = L-xylulose 5-phosphate. The protein operates within cofactor degradation; L-ascorbate degradation; D-xylulose 5-phosphate from L-ascorbate: step 3/4. Its function is as follows. Catalyzes the isomerization of L-xylulose-5-phosphate to L-ribulose-5-phosphate. Is involved in the anaerobic L-ascorbate utilization. The polypeptide is L-ribulose-5-phosphate 3-epimerase UlaE (Escherichia coli O127:H6 (strain E2348/69 / EPEC)).